Here is a 319-residue protein sequence, read N- to C-terminus: Alpha-hemolysin (319 aa).

A signal peptide spans M1 to A26.

It belongs to the aerolysin family. Self-assembles to first form a non-lytic oligomeric intermediate, and then, a mushroom-shaped homoheptamer structure of 100 Angstroms in length and up to 100 Angstroms in diameter. Interacts with human ADAM10; this interaction is required for toxin pore formation, disruption of focal adhesions, and hly-mediated cytotoxicity.

The protein resides in the secreted. Alpha-toxin binds to the membrane of eukaryotic cells (particularly red blood cells, RBC) forming pores, resulting in hemolysis, with the release of low-molecular weight molecules leading to eventual osmotic RBC lysis. Human RBCs bind much less alpha-toxin than do rabbit RBCs. Heptamer oligomerization and pore formation is required for lytic activity. The polypeptide is Alpha-hemolysin (hly) (Staphylococcus aureus).